Consider the following 234-residue polypeptide: Small ribosomal subunit protein uS3 (234 aa).

One can recognise a KH type-2 domain in the interval Ile39 to Lys108. The tract at residues Lys212–Lys234 is disordered.

Belongs to the universal ribosomal protein uS3 family. Part of the 30S ribosomal subunit. Forms a tight complex with proteins S10 and S14.

Its function is as follows. Binds the lower part of the 30S subunit head. Binds mRNA in the 70S ribosome, positioning it for translation. The polypeptide is Small ribosomal subunit protein uS3 (Alkaliphilus metalliredigens (strain QYMF)).